A 607-amino-acid chain; its full sequence is Coronin-like protein cor-1 (607 aa).

WD repeat units follow at residues 77 to 117 (AHKA…LNRN), 127 to 167 (GHQK…ALLE), and 170 to 209 (GHPDQIWSINFNFDGSQFVTTCKDKKIRILDSHTGEVVHE). The tract at residues 415 to 564 (PTAAESVPTQ…VSAASDVGHV (150 aa)) is disordered. Over residues 424–436 (QSYSERPPSSQQP) the composition is skewed to low complexity. A compositionally biased stretch (pro residues) spans 437–447 (SPRPSASPRPR). Basic and acidic residues-rich tracts occupy residues 473 to 489 (SRTEIPPKEESKVDPMK) and 517 to 533 (AAAELERIKRDQSRTAD). Positions 544–559 (SSRASASPRGSVSAAS) are enriched in low complexity. Residues 563–602 (HVPQNMDELLEDLMKMKAVLRQHERRIRMLEEEIADRNMS) adopt a coiled-coil conformation.

This sequence belongs to the WD repeat coronin family.

Its subcellular location is the cytoplasm. The protein resides in the cytoskeleton. Functionally, required to direct the migration of Q neuroblasts along the anterior axis of the body during larval development. This is dependent on its asymmetric expression in Q neuroblasts. The protein is Coronin-like protein cor-1 (cor-1) of Caenorhabditis elegans.